Consider the following 273-residue polypeptide: Shikimate dehydrogenase (NADP(+)) (273 aa).

Shikimate is bound by residues 15-17 and threonine 62; that span reads SQS. The Proton acceptor role is filled by lysine 66. Residue glutamate 78 coordinates NADP(+). Shikimate is bound by residues asparagine 87 and aspartate 102. NADP(+)-binding positions include 127-131, 151-156, and methionine 215; these read GAGGA and NRTVTK. Residue tyrosine 217 coordinates shikimate. Glycine 239 contributes to the NADP(+) binding site.

Belongs to the shikimate dehydrogenase family. As to quaternary structure, homodimer.

It carries out the reaction shikimate + NADP(+) = 3-dehydroshikimate + NADPH + H(+). It functions in the pathway metabolic intermediate biosynthesis; chorismate biosynthesis; chorismate from D-erythrose 4-phosphate and phosphoenolpyruvate: step 4/7. Its function is as follows. Involved in the biosynthesis of the chorismate, which leads to the biosynthesis of aromatic amino acids. Catalyzes the reversible NADPH linked reduction of 3-dehydroshikimate (DHSA) to yield shikimate (SA). This chain is Shikimate dehydrogenase (NADP(+)), found in Laribacter hongkongensis (strain HLHK9).